The following is a 289-amino-acid chain: Cysteine-rich venom protein Mr30 (289 aa).

The N-terminal stretch at Met-1–Arg-24 is a signal peptide. Glu-33 carries the post-translational modification 4-carboxyglutamate. Residues Val-62–Tyr-184 enclose the SCP domain.

The protein belongs to the CRISP family. Post-translationally, contains 11 disulfide bonds. As to expression, expressed by the venom duct.

It localises to the secreted. Its function is as follows. Has no proteolytic activity. In Conus marmoreus (Marble cone), this protein is Cysteine-rich venom protein Mr30.